Here is a 397-residue protein sequence, read N- to C-terminus: Probable inactive purple acid phosphatase 28 (397 aa).

Residues 1 to 30 (MNCSIGNWKHTVLYLTLIVSLLYFIESLIS) form the signal peptide. N-linked (GlcNAc...) asparagine glycosylation is found at N91 and N209. Positions 266 and 314 each coordinate Zn(2+). 314-316 (HDH) contacts substrate. H316 provides a ligand contact to Fe cation.

It belongs to the metallophosphoesterase superfamily. Purple acid phosphatase family. As to quaternary structure, homodimer. Requires Fe cation as cofactor. Zn(2+) serves as cofactor. Expressed in roots, stems, leaves, flowers and siliques.

Its subcellular location is the secreted. This Arabidopsis thaliana (Mouse-ear cress) protein is Probable inactive purple acid phosphatase 28 (PAP28).